A 549-amino-acid polypeptide reads, in one-letter code: Urocanate hydratase (549 aa).

Residues 46–47, Gln-124, 170–172, Glu-190, Arg-195, 236–237, 257–261, 267–268, and Tyr-316 contribute to the NAD(+) site; these read GG, GMG, NA, QTSAH, and YV. Cys-404 is a catalytic residue. Residue Gly-486 participates in NAD(+) binding.

The protein belongs to the urocanase family. Requires NAD(+) as cofactor.

Its subcellular location is the cytoplasm. It catalyses the reaction 4-imidazolone-5-propanoate = trans-urocanate + H2O. The protein operates within amino-acid degradation; L-histidine degradation into L-glutamate; N-formimidoyl-L-glutamate from L-histidine: step 2/3. In terms of biological role, catalyzes the conversion of urocanate to 4-imidazolone-5-propionate. The sequence is that of Urocanate hydratase from Natranaerobius thermophilus (strain ATCC BAA-1301 / DSM 18059 / JW/NM-WN-LF).